A 438-amino-acid chain; its full sequence is Methylenetetrahydrofolate--tRNA-(uracil-5-)-methyltransferase TrmFO (438 aa).

9–14 (GGGLAG) is a binding site for FAD.

This sequence belongs to the MnmG family. TrmFO subfamily. It depends on FAD as a cofactor.

It is found in the cytoplasm. It catalyses the reaction uridine(54) in tRNA + (6R)-5,10-methylene-5,6,7,8-tetrahydrofolate + NADH + H(+) = 5-methyluridine(54) in tRNA + (6S)-5,6,7,8-tetrahydrofolate + NAD(+). It carries out the reaction uridine(54) in tRNA + (6R)-5,10-methylene-5,6,7,8-tetrahydrofolate + NADPH + H(+) = 5-methyluridine(54) in tRNA + (6S)-5,6,7,8-tetrahydrofolate + NADP(+). Catalyzes the folate-dependent formation of 5-methyl-uridine at position 54 (M-5-U54) in all tRNAs. This is Methylenetetrahydrofolate--tRNA-(uracil-5-)-methyltransferase TrmFO from Lactobacillus johnsonii (strain CNCM I-12250 / La1 / NCC 533).